Reading from the N-terminus, the 103-residue chain is Matrix Gla protein (103 aa).

The N-terminal stretch at methionine 1–cysteine 19 is a signal peptide. Position 21 is a 4-carboxyglutamate (glutamate 21). Phosphoserine is present on residues serine 22, serine 25, and serine 28. Residues histidine 51–arginine 97 form the Gla domain. 4 positions are modified to 4-carboxyglutamate: glutamate 56, glutamate 60, glutamate 67, and glutamate 71. A disulfide bridge links cysteine 73 with cysteine 79.

The protein belongs to the osteocalcin/matrix Gla protein family. Post-translationally, requires vitamin K-dependent gamma-carboxylation for its function.

It is found in the secreted. In terms of biological role, associates with the organic matrix of bone and cartilage. Thought to act as an inhibitor of bone formation. The polypeptide is Matrix Gla protein (Mgp) (Rattus norvegicus (Rat)).